The following is a 351-amino-acid chain: MEPKRIREGYLVKRGSVFNTWKPMWVVLLEDGIEFYKKKSDNSPKGMIPLKGSTLTSPCQDFGKRMFVFKITTTKQQDHFFQAAFLEERDSWVRDTKKAIKCIEGGQKFARKSTRRSIRLPETVDLGALYLSMKDIEKGIKELNLEKDKKIFNHCFTGNCVIDWLVSNKSVRNRQEGLMIASSLLGEGYLQPAGELSKNAADGMAEHPFLDNPDAFYYFPDSGFFCEENSSDDDVILKEEFRGVIIKQGCLLKQGHRRKNWKVRKFILREDPAYLHYYDPAAGGEEPLGAIHLRGCVVTSVESNPDVRKSEEENLFEIITADEVHYFLQAATPKERTEWIKAIQVASRTGK.

The PH 1 domain occupies 4–101 (KRIREGYLVK…WVRDTKKAIK (98 aa)). At lysine 64 the chain carries N6-acetyllysine. 2 positions are modified to phosphoserine: serine 113 and serine 117. The 86-residue stretch at 136-221 (IEKGIKELNL…NPDAFYYFPD (86 aa)) folds into the DEP domain. The PH 2 domain maps to 244 to 348 (VIIKQGCLLK…WIKAIQVASR (105 aa)).

Its function is as follows. Major protein kinase C substrate of platelets. This is Pleckstrin (PLEK) from Canis lupus familiaris (Dog).